The chain runs to 480 residues: Probable GH family 25 lysozyme 3 (480 aa).

An N-terminal signal peptide occupies residues 1 to 20; the sequence is MNKLILSILSVLLIVSIASA. The Ch-type lysozyme domain occupies 21–231; the sequence is GNGIDISSGT…STTSSSATSS (211 aa). Catalysis depends on residues aspartate 25, aspartate 114, and glutamate 116. Residues 219-472 are compositionally biased toward low complexity; the sequence is SGSSTTSSSA…SSGSGNYTSG (254 aa). Residues 219 to 480 are disordered; sequence SGSSTTSSSA…SGSGNGAFLF (262 aa). Residues asparagine 423, asparagine 428, asparagine 437, asparagine 446, and asparagine 468 are each glycosylated (N-linked (GlcNAc...) asparagine).

It belongs to the glycosyl hydrolase 25 family.

The protein resides in the secreted. It carries out the reaction Hydrolysis of (1-&gt;4)-beta-linkages between N-acetylmuramic acid and N-acetyl-D-glucosamine residues in a peptidoglycan and between N-acetyl-D-glucosamine residues in chitodextrins.. This is Probable GH family 25 lysozyme 3 from Dictyostelium discoideum (Social amoeba).